Consider the following 647-residue polypeptide: XK-related protein 4 (647 aa).

A helical transmembrane segment spans residues 142 to 162 (WFGLTLFFVVLGSLSVQVFSF). The interval 193–238 (VSSGSAAGEGEARPSTPQRQASNASKSNIAATNSGSNSNGATRTSG) is disordered. A Phosphoserine modification is found at S197. Polar residues predominate over residues 207-236 (STPQRQASNASKSNIAATNSGSNSNGATRT). 7 helical membrane-spanning segments follow: residues 245 to 265 (CSFC…GQVW), 328 to 348 (LQAL…WALA), 362 to 382 (KPIS…TIAA), 393 to 415 (VFQL…WIVH), 425 to 445 (WEEI…WFNV), 454 to 474 (LFIY…LWYL), and 484 to 504 (FAIP…VFML).

The protein belongs to the XK family. In terms of assembly, homodimer; homodimerization takes place upon caspase cleavage. Interacts with the processed C-terminus of XRCC4 (protein XRCC4, C-terminus); interaction promotes the phospholipid scramblase activity. Undergoes proteolytic processing by caspase-3 (CASP3), caspase-6 (CASP6) and caspase-7 (CASP7) to generate the XK-related protein 4, processed form, leading to its activation.

The protein localises to the cell membrane. The enzyme catalyses a 1,2-diacyl-sn-glycero-3-phospho-L-serine(in) = a 1,2-diacyl-sn-glycero-3-phospho-L-serine(out). With respect to regulation, phospholipid scramblase activity is activated upon caspase cleavage to generate the XK-related protein 4, processed form. Does not act prior the onset of apoptosis. Homodimerizes upon caspase cleavage. Phospholipid scramblase activity is activated following interaction with the processed C-terminus of XRCC4 (protein XRCC4, C-terminus). Functionally, phospholipid scramblase that promotes phosphatidylserine exposure on apoptotic cell surface. Phosphatidylserine is a specific marker only present at the surface of apoptotic cells and acts as a specific signal for engulfment. The polypeptide is XK-related protein 4 (Rattus norvegicus (Rat)).